A 154-amino-acid chain; its full sequence is Superoxide dismutase [Cu-Zn] (154 aa).

3 residues coordinate Cu cation: H45, H47, and H62. The cysteines at positions 56 and 146 are disulfide-linked. The Zn(2+) site is built by H62, H70, H79, and D82. Residue H120 coordinates Cu cation.

It belongs to the Cu-Zn superoxide dismutase family. As to quaternary structure, homodimer. Cu cation is required as a cofactor. Zn(2+) serves as cofactor.

It is found in the cytoplasm. The catalysed reaction is 2 superoxide + 2 H(+) = H2O2 + O2. Destroys radicals which are normally produced within the cells and which are toxic to biological systems. In Bombyx mori (Silk moth), this protein is Superoxide dismutase [Cu-Zn].